We begin with the raw amino-acid sequence, 483 residues long: Ankyrin repeat domain-containing protein M-T5 (483 aa).

ANK repeat units follow at residues 32–63 (SRDT…DVNG), 67–101 (SRTS…DVNA), 105–137 (DGRY…SVYV), 177–210 (YGFN…DSSR), 250–279 (LDFT…DPNV), and 283–312 (LGNS…TPDA). Residues 390–478 (VSVFDTAFGL…LTDDEIHDLF (89 aa)) are PRANC/F-box-like.

In terms of assembly, interacts (via PRANC/F-box-like domain) with the SKP1 component of the host SCF ubiquitin ligase complex. Interacts (via N-terminus) with host AKT1.

Functionally, substrate-specific adapter of SKP1-containing E3 ubiquitin-protein ligases which mediate the ubiquitination and subsequent proteasomal degradation of host target proteins including CDKN1B. Disappearance of host CDKN1B correlates with cell cycle progression through the G0/G1 checkpoint. Therefore, viruses in infected cells are protected from diverse innate host antiviral responses normally triggered by G0/G1 cell cycle arrest. The chain is Ankyrin repeat domain-containing protein M-T5 (m005R) from Myxoma virus (strain Lausanne) (MYXV).